Reading from the N-terminus, the 193-residue chain is Apoptosis-associated speck-like protein containing a CARD (193 aa).

One can recognise a Pyrin domain in the interval 1–91 (MGRARDAILD…AEQLQTTKEE (91 aa)). Glycyl lysine isopeptide (Lys-Gly) (interchain with G-Cter in ubiquitin) cross-links involve residues Lys-55 and Lys-172. A CARD domain is found at 105 to 193 (STARTGHFVD…PYLVMDLEQS (89 aa)). At Ser-193 the chain carries Phosphoserine.

In terms of assembly, self-associates; enforced oligomerization induces apoptosis, NF-kappa-B regulation and interleukin-1 beta secretion. Homooligomers can form disk-like particles of approximately 12 nm diameter and approximately 1 nm height. Component of several inflammasomes containing one pattern recognition receptor/sensor, such as NLRP2, NLRP3, NLRP6, NLRC4, AIM2, MEFV or NOD2, and probably NLRC4 or NLRP12. Major component of the ASC pyroptosome, a 1-2 um supramolecular assembly (one per macrophage cell) which consists of oligomerized PYCARD dimers and CASP1. Interacts with CASP1 (precursor form); the interaction induces activation of CASP1 leading to the processing of interleukin-1 beta; PYCARD competes with RIPK2 for binding to CASP1. Interacts with NLRP3; the interaction requires the homooligomerization of NLRP3. Interacts with NLRP2, NLRC4, MEFV, CARD16, AIM2, NOD2, RIGI, RIPK2, PYDC1, PYDC2, NLRP10, CHUK, IKBKB and BAX. Interacts with CASP8. Component of the AIM2 PANoptosome complex, a multiprotein complex that drives inflammatory cell death (PANoptosis). Phosphorylated. Post-translationally, 'Lys-63'-linked polyubiquitination by TRAF3 is critical for speck formation and inflammasome activation. 'Lys-63'-linked deubiquitinated by USP50; a crucial step for NLRP3-mediated inflammasome activation. 'Lys-63'-linked polyubiquitination by PELI1 is also critical for speck formation and inflammasome activation. Deubiquitinated by USP3 that cleaves 'Lys-48'-linked ubiquitin chains and strengthens its stability by blocking proteasomal degradation. Expressed in small intestine, colon, thymus, spleen, brain, heart, skeletal muscle, kidney, lung and liver.

It is found in the cytoplasm. The protein resides in the inflammasome. The protein localises to the endoplasmic reticulum. It localises to the mitochondrion. Its subcellular location is the nucleus. Functionally, functions as a key mediator in apoptosis and inflammation. Promotes caspase-mediated apoptosis involving predominantly caspase-8 and also caspase-9 in a probable cell type-specific manner. Involved in activation of the mitochondrial apoptotic pathway, promotes caspase-8-dependent proteolytic maturation of BID independently of FADD in certain cell types and also mediates mitochondrial translocation of BAX and activates BAX-dependent apoptosis coupled to activation of caspase-9, -2 and -3. Involved in innate immune response by acting as an integral adapter in the assembly of various inflammasomes (NLRP2, NLRP3, NLRP6 and AIM2) which recruit and activate caspase-1 leading to processing and secretion of pro-inflammatory cytokines. Caspase-1-dependent inflammation leads to macrophage pyroptosis, a form of cell death. The function as activating adapter in different types of inflammasomes is mediated by the pyrin and CARD domains and their homotypic interactions. Clustered PYCARD nucleates the formation of caspase-1 filaments through the interaction of their respective CARD domains, acting as a platform for of caspase-1 polymerization. In the NLRC4 inflammasomes seems not be required but facilitates the processing of procaspase-1. In cooperation with NOD2 involved in an inflammasome activated by bacterial muramyl dipeptide leading to caspase-1 activation. May be involved in RIGI-triggered pro-inflammatory responses and inflammasome activation. In collaboration with AIM2 which detects cytosolic double-stranded DNA may also be involved in a caspase-1-independent cell death that involves caspase-8. In adaptive immunity may be involved in maturation of dendritic cells to stimulate T-cell immunity and in cytoskeletal rearrangements coupled to chemotaxis and antigen uptake may be involved in post-transcriptional regulation of the guanine nucleotide exchange factor DOCK2; the latter function is proposed to involve the nuclear form. Also involved in transcriptional activation of cytokines and chemokines independent of the inflammasome; this function may involve AP-1, NF-kappa-B, MAPK and caspase-8 signaling pathways. For regulation of NF-kappa-B activating and inhibiting functions have been reported. Modulates NF-kappa-B induction at the level of the IKK complex by inhibiting kinase activity of CHUK and IKBK. Proposed to compete with RIPK2 for association with CASP1 thereby down-regulating CASP1-mediated RIPK2-dependent NF-kappa-B activation and activating interleukin-1 beta processing. Modulates host resistance to DNA virus infection, probably by inducing the cleavage of and inactivating CGAS in presence of cytoplasmic double-stranded DNA. The protein is Apoptosis-associated speck-like protein containing a CARD (Pycard) of Mus musculus (Mouse).